The following is a 215-amino-acid chain: Probable GTP-binding protein EngB (215 aa).

The region spanning 31-215 (GPPEIAFAGR…RAAILQAIAV (185 aa)) is the EngB-type G domain. GTP is bound by residues 39-46 (GRSNVGKS), 66-70 (GRTQE), 93-96 (DMPG), 160-163 (TKSD), and 194-196 (TSS). 2 residues coordinate Mg(2+): S46 and T68.

This sequence belongs to the TRAFAC class TrmE-Era-EngA-EngB-Septin-like GTPase superfamily. EngB GTPase family. It depends on Mg(2+) as a cofactor.

Necessary for normal cell division and for the maintenance of normal septation. This Bartonella quintana (strain Toulouse) (Rochalimaea quintana) protein is Probable GTP-binding protein EngB.